A 348-amino-acid chain; its full sequence is D-alanine--D-alanine ligase (348 aa).

The ATP-grasp domain occupies 132–334 (KRVLESIGIP…YPDLIEELVT (203 aa)). ATP is bound at residue 162-217 (LARLTFPIFVKPANMGSSVGISKAQTKVELRKAIQLALTYDSRVLIEQGVVAREIE). Residues Asp288, Glu301, and Asn303 each contribute to the Mg(2+) site.

The protein belongs to the D-alanine--D-alanine ligase family. It depends on Mg(2+) as a cofactor. Mn(2+) is required as a cofactor.

The protein localises to the cytoplasm. It catalyses the reaction 2 D-alanine + ATP = D-alanyl-D-alanine + ADP + phosphate + H(+). Its pathway is cell wall biogenesis; peptidoglycan biosynthesis. Functionally, cell wall formation. The sequence is that of D-alanine--D-alanine ligase from Streptococcus pyogenes serotype M12 (strain MGAS2096).